The chain runs to 334 residues: MSAIDVGVIGASGYTGLELIKILLKHPKFNLSYVANTEGGATLSELHPSLKGAFECNVVKVDIDELAKKCELVFLAVPHQAAMAYVKPLIEKGLKVVDLSADYRLSKDIYEEFYCPHTDVENLLHAVYGLPELFAQKIKKAKLVANPGCFPTSAILGLLPFMDKRVAHTPIIVDSKTGVSGAGKKLSDVTHFVNVNENLFAYNPLLHRHAPEIAQKLGVDFDEVHFVPHLVPVTRGMLSSIYIQVEGDFDAFSILSEFYKDAKHVRVSKNPVDMKSVAGTNFCDIYVKQKNNILFISSAIDNLMRGASSAAVVNANLMMGFDEELGIPNIAYVP.

Cysteine 149 is an active-site residue.

It belongs to the NAGSA dehydrogenase family. Type 1 subfamily.

It localises to the cytoplasm. The catalysed reaction is N-acetyl-L-glutamate 5-semialdehyde + phosphate + NADP(+) = N-acetyl-L-glutamyl 5-phosphate + NADPH + H(+). It participates in amino-acid biosynthesis; L-arginine biosynthesis; N(2)-acetyl-L-ornithine from L-glutamate: step 3/4. Functionally, catalyzes the NADPH-dependent reduction of N-acetyl-5-glutamyl phosphate to yield N-acetyl-L-glutamate 5-semialdehyde. The polypeptide is N-acetyl-gamma-glutamyl-phosphate reductase (Sulfurimonas denitrificans (strain ATCC 33889 / DSM 1251) (Thiomicrospira denitrificans (strain ATCC 33889 / DSM 1251))).